A 469-amino-acid polypeptide reads, in one-letter code: Receptor-type adenylate cyclase (469 aa).

Residues 1-59 lie on the Extracellular side of the membrane; that stretch reads VDTAEKLSKNGCASNYGATQISVWSMARALNASIPPLTNPMTPSMTFRNSNAGRISGVA. N-linked (GlcNAc...) asparagine glycosylation is present at Asn31. Residues 60 to 80 traverse the membrane as a helical segment; that stretch reads LVGVIIGGALALFLVVALGVV. Residues 81–469 lie on the Cytoplasmic side of the membrane; the sequence is PYFFLHNTRD…IDLENDSTTS (389 aa). Residues 103–257 enclose the Guanylate cyclase domain; that stretch reads TLIFTDIESS…RTSNMAARTE (155 aa). Residues Asp108 and Asp151 each coordinate Mg(2+).

This sequence belongs to the adenylyl cyclase class-3 family. Mg(2+) serves as cofactor.

The protein localises to the cell membrane. It carries out the reaction ATP = 3',5'-cyclic AMP + diphosphate. In terms of biological role, could act as a receptor for an unknown ligand. The sequence is that of Receptor-type adenylate cyclase (ESAG4C) from Trypanosoma equiperdum.